The following is a 51-amino-acid chain: Zinc metalloproteinase-disintegrin-like crovidisin (51 aa).

In terms of domain architecture, Peptidase M12B spans 1 to 12 (AMVTKNNGDLDK). In terms of domain architecture, Disintegrin spans 13-18 (SGTECR). Residue N29 is glycosylated (N-linked (GlcNAc...) asparagine).

It belongs to the venom metalloproteinase (M12B) family. P-III subfamily. P-IIIa sub-subfamily. Monomer. Requires Zn(2+) as cofactor. As to expression, expressed by the venom gland.

Its subcellular location is the secreted. Snake venom zinc metalloproteinase-disintegrin-like that blocks the interaction between platelets and collagen fibers through its binding to collagen fibers, resulting in the blockade of collagen-mediated platelet functions such as adhesion, release reaction, thromboxane formation, and aggregation. Binds selectively to collagen type I with high affinity. Also exerts proteolytic activity to matrix. The sequence is that of Zinc metalloproteinase-disintegrin-like crovidisin from Crotalus viridis viridis (Prairie rattlesnake).